Consider the following 400-residue polypeptide: S-adenosylmethionine synthase (400 aa).

Position 136 to 141 (136 to 141) interacts with ATP; sequence GQGSVD.

It belongs to the AdoMet synthase 2 family. Mg(2+) serves as cofactor.

The enzyme catalyses L-methionine + ATP + H2O = S-adenosyl-L-methionine + phosphate + diphosphate. It participates in amino-acid biosynthesis; S-adenosyl-L-methionine biosynthesis; S-adenosyl-L-methionine from L-methionine: step 1/1. Functionally, catalyzes the formation of S-adenosylmethionine from methionine and ATP. The sequence is that of S-adenosylmethionine synthase from Thermoplasma volcanium (strain ATCC 51530 / DSM 4299 / JCM 9571 / NBRC 15438 / GSS1).